Here is a 397-residue protein sequence, read N- to C-terminus: Phosphoglycerate kinase (397 aa).

Residues 25 to 27 (DLN), arginine 41, 64 to 67 (HLGR), arginine 118, and arginine 151 contribute to the substrate site. Residues lysine 202, glutamate 324, and 350 to 353 (GGDT) each bind ATP.

It belongs to the phosphoglycerate kinase family. In terms of assembly, monomer.

Its subcellular location is the cytoplasm. The enzyme catalyses (2R)-3-phosphoglycerate + ATP = (2R)-3-phospho-glyceroyl phosphate + ADP. The protein operates within carbohydrate degradation; glycolysis; pyruvate from D-glyceraldehyde 3-phosphate: step 2/5. This Albidiferax ferrireducens (strain ATCC BAA-621 / DSM 15236 / T118) (Rhodoferax ferrireducens) protein is Phosphoglycerate kinase.